The chain runs to 538 residues: MAKLIAFDQDAREGILRGVDALANAVKVTLGPRGRNVVLDKAFGGPLVTNDGVTIARDIDLEDPFENLGAQLVKSVAVKTNDIAGDGTTTATLLAQALIAEGLRNVAAGANPMELNKGISAAAEKTLEELKARATEVSDTKEIANVATVSSRDEVVGEIVAAAMEKVGKDGVVTVEESQSIETALEVTEGISFDKGYLSPYFINDNDTQQAVLDNPAVLLVRNKISSLPDFLPLLEKVVESNRPLLIIAEDVEGEPLQTLVVNSIRKTIKVVAVKSPYFGDRRKAFMDDLAIVTKATVVDPEVGINLNEAGEEVFGTARRITVSKDETIIVDGAGSAEDVEARRGQIRREIANTDSTWDREKAEERLAKLSGGIAVIRVGAATETEVNDRKLRVEDAINAARAAAQEGVIAGGGSALVQIAETLKAYAEEFEGDQKVGVRALATALGKPAYWIASNAGLDGSVVVARTAALPNGEGFNAATLEYGNLINDGVIDPVKVTHSAVVNATSVARMVLTTEASVVEKPAEEAADAHAGHHHH.

ATP is bound by residues 29–32 (TLGP), 86–90 (DGTTT), Gly-413, 478–480 (NAA), and Asp-494.

This sequence belongs to the chaperonin (HSP60) family. Forms a cylinder of 14 subunits composed of two heptameric rings stacked back-to-back. Interacts with the co-chaperonin GroES.

It is found in the cytoplasm. The catalysed reaction is ATP + H2O + a folded polypeptide = ADP + phosphate + an unfolded polypeptide.. In terms of biological role, together with its co-chaperonin GroES, plays an essential role in assisting protein folding. The GroEL-GroES system forms a nano-cage that allows encapsulation of the non-native substrate proteins and provides a physical environment optimized to promote and accelerate protein folding. The protein is Chaperonin GroEL 1 of Corynebacterium glutamicum (strain ATCC 13032 / DSM 20300 / JCM 1318 / BCRC 11384 / CCUG 27702 / LMG 3730 / NBRC 12168 / NCIMB 10025 / NRRL B-2784 / 534).